The chain runs to 1218 residues: Sodium bicarbonate cotransporter 3 (1218 aa).

2 disordered regions span residues 1–31 (MEAD…KTSS) and 53–99 (HVPF…SQRV). The Extracellular segment spans residues 1–612 (MEADGAGEQM…DFKDALSLQC (612 aa)). 4 positions are modified to phosphoserine: Ser57, Ser60, Ser89, and Ser155. Over residues 60–77 (SRRRHRHRGHKHHHRRRK) the composition is skewed to basic residues. Residues 78 to 90 (DKDSDKEDGRESP) are compositionally biased toward basic and acidic residues. N-linked (GlcNAc...) asparagine glycosylation is present at Asn176. A phosphoserine mark is found at Ser238, Ser247, and Arg263. An N-linked (GlcNAc...) asparagine glycan is attached at Asn274. 3 disordered regions span residues 294–350 (SRAG…DIPR), 364–412 (KGQE…ENST), and 536–577 (SIRI…HAGP). Positions 308-318 (VPTPQNSPPSS) are enriched in pro residues. The segment covering 319–337 (PSLSRLTSRSSQQTQPQAP) has biased composition (low complexity). Over residues 383 to 396 (SPQSAPGNLDSSKS) the composition is skewed to polar residues. A phosphoserine mark is found at Ser386, Ser404, and Ser407. Asn410 carries N-linked (GlcNAc...) asparagine glycosylation. A phosphoserine mark is found at Ser411 and Ser560. Over residues 567-576 (PPKEADHHAG) the composition is skewed to basic and acidic residues. Residues 613-633 (LASILFLYCACMSPVITFGGL) traverse the membrane as a helical segment. Topologically, residues 634–641 (LGEATEGR) are cytoplasmic. Residues 642–662 (ISAIESLFGASLTGIAYSLFA) form a helical membrane-spanning segment. Over 663–699 (GQPLTILGSTGPVLVFEKILFKFCRDYHLSYLSLRTS) the chain is Extracellular. A helical membrane pass occupies residues 700-720 (IGLWTSFLCIVLVATDASSLV). At 721–729 (CYITRFTEE) the chain is on the cytoplasmic side. Residues 730 to 750 (AFAALICIIFIYEALEKLFHL) form a helical membrane-spanning segment. Topologically, residues 751–821 (GEIYAFNMHN…MFVGSACGPH (71 aa)) are extracellular. The cysteines at positions 770 and 772 are disulfide-linked. 3 N-linked (GlcNAc...) asparagine glycosylation sites follow: Asn780, Asn790, and Asn800. An intrachain disulfide couples Cys806 to Cys818. A helical membrane pass occupies residues 822–842 (GPYVPDVLFWCVVLFFTTFFL). The Cytoplasmic portion of the chain corresponds to 843–865 (SSFLKQFKTKRYFPTKVRSTISD). A helical membrane pass occupies residues 866–886 (FAVFLTIVIMVAIDYLVGIPS). The Extracellular segment spans residues 887–912 (PKLHVPEKFEPTDPSRGWIISPLGDN). A helical transmembrane segment spans residues 913–933 (PWWTLLIAAVPALLCTILIFM). The Cytoplasmic portion of the chain corresponds to 934 to 958 (DQQITAVIINRKEHKLKKGAGYHLD). Residues 959-979 (LLMVAVMLGVCSIMGLPWFVA) traverse the membrane as a helical segment. At 980–1015 (ATVLSISHVNSLKVESECSAPGEQPKFLGIREQRVT) the chain is on the extracellular side. The tract at residues 1012–1135 (QRVTGLMIFI…MDLCFTKREL (124 aa)) is essential for cell membrane localization and transport activity. Residues 1016–1036 (GLMIFILMGLSVFMTSVLKFI) traverse the membrane as a helical segment. Residues 1037-1038 (PM) are Cytoplasmic-facing. A helical transmembrane segment spans residues 1039–1059 (PVLYGVFLYMGVSSLKGIQFF). Residues 1060-1096 (DRIKLFGMPAKHQPDLIYLRYVPLWKVHVFTVVQLTC) are Extracellular-facing. Phosphoserine occurs at positions 1067 and 1078. The helical transmembrane segment at 1097-1117 (LVLLWVIKASAAAVVFPMMVL) threads the bilayer. The segment at 1118–1140 (ALVFVRKLMDLCFTKRELSWLDD) is essential for interaction with RACK1. The Cytoplasmic portion of the chain corresponds to 1118–1218 (ALVFVRKLMD…KKYMDAETSL (101 aa)). The tract at residues 1138–1140 (LDD) is CA2-binding. Over residues 1148 to 1165 (KKEDDKKKKEKEEAERML) the composition is skewed to basic and acidic residues. The interval 1148 to 1172 (KKEDDKKKKEKEEAERMLQGDGDTV) is disordered. Thr1171 bears the Phosphothreonine mark. Residues Ser1180, Thr1188, Ile1201, and Ser1217 each carry the phosphoserine modification. The short motif at 1215-1218 (ETSL) is the PDZ-binding element.

It belongs to the anion exchanger (TC 2.A.31) family. As to quaternary structure, interacts with USH1C. Forms a complex with ATP6V1B1 and NHERF1/EBP50. Interacts in a pH dependent-manner with CA2/carbonic anhydrase 2. Interacts with CFTR probably through NHERF1/EBP50. In terms of assembly, interacts with RACK1. Post-translationally, undergoes lysosome-mediated degradation. In terms of processing, N-glycosylated. Expressed in aorta, ventricles, atrium, mesenteric artery, kidney, spleen, duodenum, jejunum, ileum, colon, lung, trachea, gastric fundus and pylorus, cerebrum, cerebellum, pancreas, liver, parotid gland, and epididymis. Expressed in the inner ear by cochlear outer and inner hair cells (at protein level). Highly expressed in testis and spleen. As to expression, specifically expressed in kidney. In terms of tissue distribution, specifically expressed in hippocampal neurons.

The protein localises to the basolateral cell membrane. The protein resides in the apical cell membrane. It is found in the cell projection. Its subcellular location is the stereocilium. It localises to the cell membrane. The enzyme catalyses hydrogencarbonate(in) + Na(+)(in) = hydrogencarbonate(out) + Na(+)(out). Insensitive to stilbene derivatives. Electroneutral sodium- and bicarbonate-dependent cotransporter with a Na(+):HCO3(-) 1:1 stoichiometry. Mediates the sodium-dependent bicarbonate transport important for pH recovery after acid load as well as for regulation of steady-state pH in the duodenum and vascular smooth muscle cells. Plays a key role in macrophage acidification, mediating bicarbonate import into the cytoplasm which is crucial for net acid extrusion and maintenance of cytoplasmic pH during phagocytosis. Provides cellular bicarbonate for de novo purine and pyrimidine synthesis and is a key mediator of de novo nucleotide synthesis downstream of mTORC1 signaling in proliferating cells. This chain is Sodium bicarbonate cotransporter 3 (Slc4a7), found in Rattus norvegicus (Rat).